The sequence spans 119 residues: Small ribosomal subunit protein uS10 (119 aa).

It belongs to the universal ribosomal protein uS10 family. In terms of assembly, component of the small ribosomal subunit. Mature ribosomes consist of a small (40S) and a large (60S) subunit. The 40S subunit contains about 32 different proteins and 1 molecule of RNA (18S). The 60S subunit contains 45 different proteins and 3 molecules of RNA (25S, 5.8S and 5S).

The protein localises to the cytoplasm. Its function is as follows. Component of the ribosome, a large ribonucleoprotein complex responsible for the synthesis of proteins in the cell. The small ribosomal subunit (SSU) binds messenger RNAs (mRNAs) and translates the encoded message by selecting cognate aminoacyl-transfer RNA (tRNA) molecules. The large subunit (LSU) contains the ribosomal catalytic site termed the peptidyl transferase center (PTC), which catalyzes the formation of peptide bonds, thereby polymerizing the amino acids delivered by tRNAs into a polypeptide chain. The nascent polypeptides leave the ribosome through a tunnel in the LSU and interact with protein factors that function in enzymatic processing, targeting, and the membrane insertion of nascent chains at the exit of the ribosomal tunnel. The sequence is that of Small ribosomal subunit protein uS10 (RPS20) from Candida albicans (strain SC5314 / ATCC MYA-2876) (Yeast).